A 136-amino-acid chain; its full sequence is Small ribosomal subunit protein uS8c (136 aa).

The protein belongs to the universal ribosomal protein uS8 family. Part of the 30S ribosomal subunit.

It is found in the plastid. It localises to the chloroplast. Its function is as follows. One of the primary rRNA binding proteins, it binds directly to 16S rRNA central domain where it helps coordinate assembly of the platform of the 30S subunit. The chain is Small ribosomal subunit protein uS8c (rps8) from Hordeum vulgare (Barley).